Here is a 202-residue protein sequence, read N- to C-terminus: Phosphoenolpyruvate guanylyltransferase (202 aa).

Thr-140, Gly-156, and Ser-159 together coordinate phosphoenolpyruvate.

This sequence belongs to the CofC family.

The catalysed reaction is phosphoenolpyruvate + GTP + H(+) = enolpyruvoyl-2-diphospho-5'-guanosine + diphosphate. The protein operates within cofactor biosynthesis; coenzyme F420 biosynthesis. In terms of biological role, guanylyltransferase that catalyzes the activation of phosphoenolpyruvate (PEP) as enolpyruvoyl-2-diphospho-5'-guanosine, via the condensation of PEP with GTP. It is involved in the biosynthesis of coenzyme F420, a hydride carrier cofactor. This Chloroflexus aggregans (strain MD-66 / DSM 9485) protein is Phosphoenolpyruvate guanylyltransferase.